A 543-amino-acid polypeptide reads, in one-letter code: Dipeptide-binding protein DppE (543 aa).

Positions 1–22 (MKRVKKLWGMGLALGLSFALMG) are cleaved as a signal peptide. The N-palmitoyl cysteine moiety is linked to residue Cys23. Cys23 carries S-diacylglycerol cysteine lipidation.

Belongs to the bacterial solute-binding protein 5 family.

The protein localises to the cell membrane. In terms of biological role, probably part of the ABC transporter DppBCDE involved in dipeptide transport. The polypeptide is Dipeptide-binding protein DppE (dppE) (Bacillus subtilis (strain 168)).